We begin with the raw amino-acid sequence, 360 residues long: DNA replication and repair protein RecF (360 aa).

30 to 37 (GQNGSGKT) is an ATP binding site.

Belongs to the RecF family.

Its subcellular location is the cytoplasm. In terms of biological role, the RecF protein is involved in DNA metabolism; it is required for DNA replication and normal SOS inducibility. RecF binds preferentially to single-stranded, linear DNA. It also seems to bind ATP. The sequence is that of DNA replication and repair protein RecF from Shewanella frigidimarina (strain NCIMB 400).